The primary structure comprises 155 residues: Ribosomal RNA large subunit methyltransferase H (155 aa).

S-adenosyl-L-methionine is bound by residues leucine 72, glycine 103, and 122–127; that span reads LSKLTM.

Belongs to the RNA methyltransferase RlmH family. As to quaternary structure, homodimer.

Its subcellular location is the cytoplasm. The catalysed reaction is pseudouridine(1915) in 23S rRNA + S-adenosyl-L-methionine = N(3)-methylpseudouridine(1915) in 23S rRNA + S-adenosyl-L-homocysteine + H(+). Specifically methylates the pseudouridine at position 1915 (m3Psi1915) in 23S rRNA. The protein is Ribosomal RNA large subunit methyltransferase H of Methylobacillus flagellatus (strain ATCC 51484 / DSM 6875 / VKM B-1610 / KT).